A 286-amino-acid chain; its full sequence is UPF0761 membrane protein KPN78578_41360 (286 aa).

7 consecutive transmembrane segments (helical) span residues 44 to 64 (LLSL…FPMF), 74 to 94 (FIFA…IEQF), 104 to 124 (VGAF…DSAL), 140 to 160 (FAVY…SLAI), 183 to 203 (LFPL…VPTT), 210 to 230 (AVIG…AFAL), and 244 to 264 (VISV…IVLL).

Belongs to the UPF0761 family.

The protein localises to the cell inner membrane. In Klebsiella pneumoniae subsp. pneumoniae (strain ATCC 700721 / MGH 78578), this protein is UPF0761 membrane protein KPN78578_41360.